The following is a 452-amino-acid chain: MSETPAQCSIKQERISYTPPESPVPSYASSTPLHVPVPRALRMEEDSIRLPAHLRLQPIYWSRDDVAQWLKWAENEFSLRPIDSNTFEMNGKALLLLTKEDFRYRSPHSGDVLYELLQHILKQRKPRILFSPFFHPGNSIHTQPEVILHQNHEEDNCVQRTPRPSVDNVHHNPPTIELLHRSRSPITTNHRPSPDPEQRPLRSPLDNMIRRLSPAERAQGPRPHQENNHQESYPLSVSPMENNHCPASSESHPKPSSPRQESTRVIQLMPSPIMHPLILNPRHSVDFKQSRLSEDGLHREGKPINLSHREDLAYMNHIMVSVSPPEEHAMPIGRIADCRLLWDYVYQLLSDSRYENFIRWEDKESKIFRIVDPNGLARLWGNHKNRTNMTYEKMSRALRHYYKLNIIRKEPGQRLLFRFMKTPDEIMSGRTDRLEHLESQELDEQIYQEDEC.

Residues 1–10 are compositionally biased toward polar residues; that stretch reads MSETPAQCSI. A disordered region spans residues 1 to 30; the sequence is MSETPAQCSIKQERISYTPPESPVPSYASS. Position 11 is an N6-acetyllysine; alternate (K11). A Glycyl lysine isopeptide (Lys-Gly) (interchain with G-Cter in SUMO2); alternate cross-link involves residue K11. Phosphothreonine is present on T18. Phosphoserine is present on S22. One can recognise a PNT domain in the interval 40 to 124; that stretch reads ALRMEEDSIR…ELLQHILKQR (85 aa). The segment at 158–262 is disordered; sequence VQRTPRPSVD…PKPSSPRQES (105 aa). Phosphoserine is present on residues S213 and S238. Residues 230–250 show a composition bias toward polar residues; it reads QESYPLSVSPMENNHCPASSE. S257 is modified (phosphoserine; by MAPK14). Residue K288 forms a Glycyl lysine isopeptide (Lys-Gly) (interchain with G-Cter in SUMO2) linkage. K302 is modified (N6-acetyllysine; alternate). Residue K302 forms a Glycyl lysine isopeptide (Lys-Gly) (interchain with G-Cter in SUMO2); alternate linkage. The residue at position 323 (S323) is a Phosphoserine. Positions 339-420 form a DNA-binding region, ETS; it reads RLLWDYVYQL…PGQRLLFRFM (82 aa). Residues K403 and K421 each participate in a glycyl lysine isopeptide (Lys-Gly) (interchain with G-Cter in SUMO2) cross-link.

This sequence belongs to the ETS family. In terms of assembly, can form homodimers or heterodimers with TEL2 or FLI1. Interacts with L3MBTL1 and HDAC9. Phosphorylation of Ser-257 by MAPK14 (p38) inhibits ETV6 transcriptional repression. As to expression, ubiquitous.

It is found in the nucleus. Transcriptional repressor; binds to the DNA sequence 5'-CCGGAAGT-3'. Plays a role in hematopoiesis and malignant transformation. This Homo sapiens (Human) protein is Transcription factor ETV6 (ETV6).